A 402-amino-acid chain; its full sequence is Phosphoglycerate kinase (402 aa).

Residues 29 to 31 (DFN), Arg45, 69 to 72 (HLGR), Arg125, and Arg158 each bind substrate. ATP contacts are provided by residues Lys209, Glu331, and 357–360 (GGDT).

Belongs to the phosphoglycerate kinase family.

The protein resides in the cytoplasm. The catalysed reaction is (2R)-3-phosphoglycerate + ATP = (2R)-3-phospho-glyceroyl phosphate + ADP. Its pathway is carbohydrate degradation; glycolysis; pyruvate from D-glyceraldehyde 3-phosphate: step 2/5. The chain is Phosphoglycerate kinase (pgk) from Helicobacter pylori (strain ATCC 700392 / 26695) (Campylobacter pylori).